We begin with the raw amino-acid sequence, 540 residues long: DM7 family protein GD24576 (540 aa).

Positions 416 to 443 are disordered; the sequence is ATDTRGRDEIRTSCDQSQEKDEGSAEAD. Positions 417 to 443 are enriched in basic and acidic residues; it reads TDTRGRDEIRTSCDQSQEKDEGSAEAD.

This sequence belongs to the DM7 family.

In Drosophila simulans (Fruit fly), this protein is DM7 family protein GD24576.